Here is a 234-residue protein sequence, read N- to C-terminus: Small ribosomal subunit protein uS3 (234 aa).

Residues 17-86 (VEKFLTKELK…SPQVEVQQVQ (70 aa)) enclose the KH type-2 domain.

This sequence belongs to the universal ribosomal protein uS3 family. Part of the 30S ribosomal subunit.

Functionally, binds the lower part of the 30S subunit head. The polypeptide is Small ribosomal subunit protein uS3 (Methanoculleus marisnigri (strain ATCC 35101 / DSM 1498 / JR1)).